Reading from the N-terminus, the 463-residue chain is Protein phosphatase PP2A regulatory subunit B (463 aa).

WD repeat units follow at residues 27–66 and 87–128; these read TEAD…KGCE and EIEE…LKVV. Residue S134 is modified to Phosphoserine. WD repeat units lie at residues 174–212, 223–263, 282–320, and 337–378; these read AHAY…HSFN, ELTE…LCDN, EIIS…APVK, and ENDC…PGDR.

Belongs to the phosphatase 2A regulatory subunit B family. PP2A exists in several trimeric forms, all of which consist of a core composed of a catalytic subunit associated with a 65 kDa (PR65) (Subunit A) and a 55 kDa (PR55) (Subunit B) regulatory subunit.

Functionally, phosphatase 2A affects a variety of biological processes in the cell such as transcription, cell cycle progression and cellular morphogenesis, and provides an initial identification of critical substrates for this phosphatase. The regulatory subunit may direct the catalytic subunit to distinct, albeit overlapping, subsets of substrates. This chain is Protein phosphatase PP2A regulatory subunit B (pab1), found in Schizosaccharomyces pombe (strain 972 / ATCC 24843) (Fission yeast).